A 274-amino-acid chain; its full sequence is E3 ubiquitin-protein ligase complex SLX5-SLX8 subunit SLX8 (274 aa).

2 disordered regions span residues 1-117 (MARR…GNNI) and 136-159 (ANTP…TNSK). Basic and acidic residues predominate over residues 13 to 28 (ENLRIKRVRLESVRQN). The residue at position 50 (Ser-50) is a Phosphoserine. Position 66 is a phosphothreonine (Thr-66). Residues 66 to 75 (TSEEDGDDDL) are compositionally biased toward acidic residues. Ser-67 carries the phosphoserine modification. Residues 97–108 (GNHDRETMHTEE) show a composition bias toward basic and acidic residues. Residues 206–250 (CPICFEPPETALMTLCGHVFCCPCLFQMVNSSRTCRQFGHCALCR) form an RING-type zinc finger.

Component of the heterodimeric SUMO-targeted ubiquitin ligase (STUbL) complex composed of SLX5 and SLX8.

The protein localises to the nucleus. The protein resides in the chromosome. It is found in the centromere. It localises to the kinetochore. The catalysed reaction is S-ubiquitinyl-[E2 ubiquitin-conjugating enzyme]-L-cysteine + [acceptor protein]-L-lysine = [E2 ubiquitin-conjugating enzyme]-L-cysteine + N(6)-ubiquitinyl-[acceptor protein]-L-lysine.. It participates in protein modification; protein ubiquitination. In terms of biological role, component of the SUMO-targeted ubiquitin ligase (STUbL) complex SLX5/SLX8 that mediates ubiquitination and subsequent desumoylation of sumoylated proteins and proteins containing SUMO-like domains for their degradation. The STUbL complex SLX5/SLX8 stimulates ubiquitin conjugating enzymes, including UBC1, UBC4, UBC5 and UBC13-MMS2, and mediates the proteolytic down-regulation of sumoylated proteins. The STUbL complex SLX5/SLX8 is involved in ubiquitin-mediated degradation of histone variant CSE4, preventing mislocalization to euchromatin. The complex plays an essential role in maintenance of chromosome stability and links SUMO-dependent ubiquitination to a centromere-specific function during mitosis. The complex is involved in proteolysis of spindle positioning protein KAR9 and ensures correct spindle function by regulating levels of microtubule-associated proteins. During replication, the complex helps to prevent DNA lesions via recombination and has a role in localizing the DNA damage protein DCD2. The complex especially ubiquitinates the nuclease YEN1 and prevents persistent accumulation of a fraction of YEN1 associated with sites of activity in late G2/M and helps maintain the balance between pro- and anti-crossover pathways during homologous recombination. It is also involved in ubiquitin-mediated degradation of DNA repair proteins RAD52 and RAD57. Finally, the complex is recruited to distinct genomic hotspots of non-H2B protein ubiquitination (ub-hotspots) by the sumoylated transcription factor-like protein EUC1 where it ubiquitinates EUC1 and presumably other targets. This chain is E3 ubiquitin-protein ligase complex SLX5-SLX8 subunit SLX8 (SLX8), found in Saccharomyces cerevisiae (strain ATCC 204508 / S288c) (Baker's yeast).